Reading from the N-terminus, the 283-residue chain is MSAQLIDGNALAKQIRSEAAVRAARLTERGHQPGLAVVLVGEDPASQVYVRNKVKACEDNGFHSSLDRYPADLSEAELLARIDALNNDPKIHGILVQLPLPKHIDSHKVLEAIAPEKDVDGFHVANAGALMTGAPLFRPCTPYGCMKMLESISYPLRGARAVVVGASNIVGKPMAMLLLQAGATVTICNSKTRDIGAHTRDADVIVAAVGKRNLITADMVKPGAVVIDVGMNRDDNGKLCGDVDFAGVREVAGYITPVPGGVGPMTITMLLINTLEAAERAAG.

Residues 165–167 and Ser190 contribute to the NADP(+) site; that span reads GAS.

Belongs to the tetrahydrofolate dehydrogenase/cyclohydrolase family. As to quaternary structure, homodimer.

It catalyses the reaction (6R)-5,10-methylene-5,6,7,8-tetrahydrofolate + NADP(+) = (6R)-5,10-methenyltetrahydrofolate + NADPH. The enzyme catalyses (6R)-5,10-methenyltetrahydrofolate + H2O = (6R)-10-formyltetrahydrofolate + H(+). Its pathway is one-carbon metabolism; tetrahydrofolate interconversion. Its function is as follows. Catalyzes the oxidation of 5,10-methylenetetrahydrofolate to 5,10-methenyltetrahydrofolate and then the hydrolysis of 5,10-methenyltetrahydrofolate to 10-formyltetrahydrofolate. This chain is Bifunctional protein FolD, found in Cupriavidus pinatubonensis (strain JMP 134 / LMG 1197) (Cupriavidus necator (strain JMP 134)).